The sequence spans 480 residues: Adenosylhomocysteinase (480 aa).

Substrate contacts are provided by T63, D142, and E203. 204–206 (TTT) is an NAD(+) binding site. Substrate contacts are provided by K233 and D237. NAD(+)-binding positions include N238, 267–272 (GYGDVG), E290, N325, 346–348 (IGH), and N394.

The protein belongs to the adenosylhomocysteinase family. The cofactor is NAD(+).

It localises to the cytoplasm. It carries out the reaction S-adenosyl-L-homocysteine + H2O = L-homocysteine + adenosine. Its pathway is amino-acid biosynthesis; L-homocysteine biosynthesis; L-homocysteine from S-adenosyl-L-homocysteine: step 1/1. In terms of biological role, may play a key role in the regulation of the intracellular concentration of adenosylhomocysteine. The chain is Adenosylhomocysteinase from Xanthomonas campestris pv. campestris (strain 8004).